The sequence spans 135 residues: Fluoride-specific ion channel FluC 2 (135 aa).

4 helical membrane passes run 5–25 (VLAA…GLLA), 36–56 (WGTV…METL), 68–88 (PFLG…ITDA), and 100–120 (ALLA…AAAG). Residues glycine 76 and threonine 79 each coordinate Na(+).

This sequence belongs to the fluoride channel Fluc/FEX (TC 1.A.43) family.

Its subcellular location is the cell membrane. It carries out the reaction fluoride(in) = fluoride(out). Its activity is regulated as follows. Na(+) is not transported, but it plays an essential structural role and its presence is essential for fluoride channel function. In terms of biological role, fluoride-specific ion channel. Important for reducing fluoride concentration in the cell, thus reducing its toxicity. This chain is Fluoride-specific ion channel FluC 2, found in Thermobifida fusca (strain YX).